Reading from the N-terminus, the 1352-residue chain is DNA-directed RNA polymerase subunit beta (1352 aa).

Belongs to the RNA polymerase beta chain family. The RNAP catalytic core consists of 2 alpha, 1 beta, 1 beta' and 1 omega subunit. When a sigma factor is associated with the core the holoenzyme is formed, which can initiate transcription.

The enzyme catalyses RNA(n) + a ribonucleoside 5'-triphosphate = RNA(n+1) + diphosphate. In terms of biological role, DNA-dependent RNA polymerase catalyzes the transcription of DNA into RNA using the four ribonucleoside triphosphates as substrates. In Hydrogenovibrio crunogenus (strain DSM 25203 / XCL-2) (Thiomicrospira crunogena), this protein is DNA-directed RNA polymerase subunit beta.